A 96-amino-acid chain; its full sequence is Co-chaperonin GroES (96 aa).

Belongs to the GroES chaperonin family. In terms of assembly, heptamer of 7 subunits arranged in a ring. Interacts with the chaperonin GroEL.

The protein resides in the cytoplasm. Together with the chaperonin GroEL, plays an essential role in assisting protein folding. The GroEL-GroES system forms a nano-cage that allows encapsulation of the non-native substrate proteins and provides a physical environment optimized to promote and accelerate protein folding. GroES binds to the apical surface of the GroEL ring, thereby capping the opening of the GroEL channel. This chain is Co-chaperonin GroES, found in Buchnera aphidicola subsp. Myzus persicae (Myzus persicae primary endosymbiont).